A 564-amino-acid chain; its full sequence is Proline--tRNA ligase (564 aa).

Belongs to the class-II aminoacyl-tRNA synthetase family. ProS type 1 subfamily. Homodimer.

The protein localises to the cytoplasm. The enzyme catalyses tRNA(Pro) + L-proline + ATP = L-prolyl-tRNA(Pro) + AMP + diphosphate. In terms of biological role, catalyzes the attachment of proline to tRNA(Pro) in a two-step reaction: proline is first activated by ATP to form Pro-AMP and then transferred to the acceptor end of tRNA(Pro). As ProRS can inadvertently accommodate and process non-cognate amino acids such as alanine and cysteine, to avoid such errors it has two additional distinct editing activities against alanine. One activity is designated as 'pretransfer' editing and involves the tRNA(Pro)-independent hydrolysis of activated Ala-AMP. The other activity is designated 'posttransfer' editing and involves deacylation of mischarged Ala-tRNA(Pro). The misacylated Cys-tRNA(Pro) is not edited by ProRS. In Thermosipho melanesiensis (strain DSM 12029 / CIP 104789 / BI429), this protein is Proline--tRNA ligase.